The chain runs to 105 residues: Nitrogen fixation nifHD2 region GlnB-like protein 1 (105 aa).

This sequence belongs to the P(II) protein family.

Could be involved in the regulation of nitrogen fixation. This chain is Nitrogen fixation nifHD2 region GlnB-like protein 1, found in Methanosarcina barkeri.